The sequence spans 176 residues: MMDWYAIQTYSGSEQSVKKAIENLANDHDIRDRIQEIIVPTEDIIEVSKKSKTKVMERSLYPGYVFIKVDLDTVLWHKIQSLPRVSRFIGENKKPTPLSEADIGHILEKMNNRAAPKPKIFFEQGEVVRVVEGPFANFTATVEEYDVEHRKLKLNVSIFGRTTPIEILYSQVEKII.

Residues glycine 125–histidine 149 enclose the KOW domain.

Belongs to the NusG family.

Its function is as follows. Participates in transcription elongation, termination and antitermination. The protein is Transcription termination/antitermination protein NusG of Helicobacter pylori (strain J99 / ATCC 700824) (Campylobacter pylori J99).